Reading from the N-terminus, the 125-residue chain is Neuropeptide B (125 aa).

The signal sequence occupies residues 1–24; it reads MARSATLAAAALALCLLLAPPGLA. The interval 54–73 is disordered; that stretch reads RRSQPYRGAEPPGGAGASPE. Positions 56-125 are excised as a propeptide; the sequence is SQPYRGAEPP…SLRAADCLAA (70 aa).

It belongs to the neuropeptide B/W family. As to expression, widely expressed in the central nervous system. High levels are found in substantia nigra, hypothalamus, hippocampus, spinal cord, placenta and fetal brain; lower levels are found in testis, uterus and ovary. Also detected at high levels in colorectal adenocarcinoma.

The protein resides in the secreted. Functionally, may be involved in the regulation of feeding, neuroendocrine system, memory, learning and in the afferent pain pathway. The chain is Neuropeptide B (NPB) from Homo sapiens (Human).